The primary structure comprises 320 residues: Aristolochene synthase (320 aa).

Positions 1 to 14 (MKKPNGTNGASSSL) are enriched in polar residues. The segment at 1–20 (MKKPNGTNGASSSLEPPPST) is disordered. Residues D90, N219, S223, and E227 each contribute to the Mg(2+) site. R314 and Y315 together coordinate (2E,6E)-farnesyl diphosphate.

This sequence belongs to the terpene synthase family. In terms of assembly, homodimer. Mg(2+) serves as cofactor.

It carries out the reaction (2E,6E)-farnesyl diphosphate = (+)-aristolochene + diphosphate. It participates in sesquiterpene biosynthesis; aristolochene biosynthesis; aristolochene from farnesyl diphosphate: step 1/1. In terms of biological role, catalyzes the cyclization of trans,trans-farnesyl diphosphate (FPP) to the bicyclic sesquiterpene aristolochene. Produces germacrene A as an enzyme-bound intermediate that is not released by the enzyme, but is further cyclized to produce aristolochene. Aristolochene is the likely parent compound for a number of sesquiterpenoid toxins produced by filamentous fungi. This is Aristolochene synthase (Ari1) from Aspergillus terreus.